The primary structure comprises 38 residues: Mu-agatoxin-Hc1c (38 aa).

Intrachain disulfides connect cysteine 3–cysteine 19, cysteine 10–cysteine 24, cysteine 18–cysteine 34, and cysteine 26–cysteine 32. At serine 38 the chain carries Serine amide.

Belongs to the neurotoxin 07 (Beta/delta-agtx) family. 02 (aga-3) subfamily. In terms of tissue distribution, expressed by the venom gland.

It is found in the secreted. Its function is as follows. Insecticidal neurotoxin that induces irreversible neuromuscular blockade in house crickets (A.domesticus). Modifies presynaptic voltage-gated sodium channels (Nav), causing them to open at the normal resting potential of the nerve. This leads to spontaneous release of neurotransmitter and repetitive action potentials in motor neurons. This Hololena curta (Funnel-web spider) protein is Mu-agatoxin-Hc1c.